A 56-amino-acid polypeptide reads, in one-letter code: Large ribosomal subunit protein bL32 (56 aa).

Residues 1–38 form a disordered region; it reads MAVQQNKKSRSRRDMRRSHDALTTAAVSVDKTSGETHL. Basic residues predominate over residues 7–16; that stretch reads KKSRSRRDMR.

Belongs to the bacterial ribosomal protein bL32 family.

This Histophilus somni (strain 129Pt) (Haemophilus somnus) protein is Large ribosomal subunit protein bL32.